The chain runs to 399 residues: MGILLGLLLLGHLTVDTYGRPILEVPESVTGPWKGDVNLPCTYDPLQGYTQVLVKWLVQRGSDPVTIFLRDSSGDHIQQAKYQGRLHVSHKVPGDVSLQLSTLEMDDRSHYTCEVTWQTPDGNQVVRDKITELRVQKLSVSKPTVTTGSGYGFTVPQGMRISLQCQARGSPPISYIWYKQQTNNQEPIKVATLSTLLFKPAVIADSGSYFCTAKGQVGSEQHSDIVKFVVKDSSKLLKTKTEAPTTMTYPLKATSTVKQSWDWTTDMDGYLGETSAGPGKSLPVFAIILIISLCCMVVFTMAYIMLCRKTSQQEHVYEAARAHAREANDSGETMRVAIFASGCSSDEPTSQNLGNNYSDEPCIGQEYQIIAQINGNYARLLDTVPLDYEFLATEGKSVC.

The signal sequence occupies residues 1–19 (MGILLGLLLLGHLTVDTYG). Topologically, residues 20–283 (RPILEVPESV…TSAGPGKSLP (264 aa)) are extracellular. 2 Ig-like domains span residues 21 to 131 (PILE…DKIT) and 143 to 226 (PTVT…SDIV). Cystine bridges form between Cys41-Cys113 and Cys165-Cys211. The helical transmembrane segment at 284 to 304 (VFAIILIISLCCMVVFTMAYI) threads the bilayer. The Cytoplasmic portion of the chain corresponds to 305–399 (MLCRKTSQQE…FLATEGKSVC (95 aa)).

As to expression, abundantly expressed in several fetal tissues. In adult tissues, highest expression in lung and placenta. Expressed in resting macrophages.

The protein localises to the membrane. In terms of biological role, phagocytic receptor, strong negative regulator of T-cell proliferation and IL2 production. Potent inhibitor of the alternative complement pathway convertases. This Homo sapiens (Human) protein is V-set and immunoglobulin domain-containing protein 4 (VSIG4).